The chain runs to 462 residues: Probable peptidoglycan glycosyltransferase FtsW (462 aa).

At 1–63 (MGCIVCSDGI…VRDGRKFDAP (63 aa)) the chain is on the cytoplasmic side. Residues 64-84 (LLWMVVLMTAFGLLMIYSASV) form a helical membrane-spanning segment. The Periplasmic portion of the chain corresponds to 85-97 (YLASKEGGDQFFY). Residues 98-118 (LTRQAGFVVAGLIASGFLWFL) traverse the membrane as a helical segment. Residues 119–125 (CRMRTWR) lie on the Cytoplasmic side of the membrane. Residues 126 to 146 (RLVPWIFALSGLLLVAVLIAG) traverse the membrane as a helical segment. Over 147-160 (REINGATRWIPLGP) the chain is Periplasmic. The chain crosses the membrane as a helical span at residues 161 to 181 (LNFQPTELFKLAVILYLASLF). Residues 182–227 (TRREEVLRSMESLGWQSIWRGTANLIMSATNPQARRETLEMYGRFR) lie on the Cytoplasmic side of the membrane. Transmembrane regions (helical) follow at residues 228 to 248 (AIILPIMLVAFGLVLIMVQPD) and 249 to 269 (FGSFVVITVITVGMLFLAGLP). The Cytoplasmic segment spans residues 270-271 (WK). Residues 272 to 292 (YFFVLVGSVLGGMVLMITAAP) traverse the membrane as a helical segment. Over 293–348 (YRVQRVVAFLDPWKDPQGAGYQLTHSLMAIGRGEWFGMGLGASLSKRGFLPEAHTD) the chain is Periplasmic. The chain crosses the membrane as a helical span at residues 349–369 (FIFAIIAEEFGFFGMCVLIFC). Residues 370–386 (YGWLVVRAFSIGKQSRD) are Cytoplasmic-facing. A helical membrane pass occupies residues 387-409 (LGLTFNAYIASGIGIWIGIQSFF). Topologically, residues 410–424 (NIGVNIGALPTKGLT) are periplasmic. Residues 425–445 (LPLMSYGGSSVFFMLISMMLL) traverse the membrane as a helical segment. Topologically, residues 446 to 462 (LRIDYENRRKMRGYRVE) are cytoplasmic.

This sequence belongs to the SEDS family. FtsW subfamily.

Its subcellular location is the cell inner membrane. It catalyses the reaction [GlcNAc-(1-&gt;4)-Mur2Ac(oyl-L-Ala-gamma-D-Glu-L-Lys-D-Ala-D-Ala)](n)-di-trans,octa-cis-undecaprenyl diphosphate + beta-D-GlcNAc-(1-&gt;4)-Mur2Ac(oyl-L-Ala-gamma-D-Glu-L-Lys-D-Ala-D-Ala)-di-trans,octa-cis-undecaprenyl diphosphate = [GlcNAc-(1-&gt;4)-Mur2Ac(oyl-L-Ala-gamma-D-Glu-L-Lys-D-Ala-D-Ala)](n+1)-di-trans,octa-cis-undecaprenyl diphosphate + di-trans,octa-cis-undecaprenyl diphosphate + H(+). The protein operates within cell wall biogenesis; peptidoglycan biosynthesis. Its function is as follows. Peptidoglycan polymerase that is essential for cell division. The chain is Probable peptidoglycan glycosyltransferase FtsW from Neisseria gonorrhoeae (strain NCCP11945).